The following is a 131-amino-acid chain: Increased copper sensitivity protein 3 (131 aa).

The next 2 membrane-spanning stretches (helical) occupy residues 35–55 and 74–94; these read ISVLHLLIATLCTIFFPIFFS and IALTMSFPLNAIPGMYLIIAF.

The protein resides in the membrane. The polypeptide is Increased copper sensitivity protein 3 (ICS3) (Saccharomyces cerevisiae (strain ATCC 204508 / S288c) (Baker's yeast)).